A 570-amino-acid chain; its full sequence is MRYSQSFIPTKKETPAEAEVASHQLMLRAGFMRKLSSGVYSYLPYGLAAIRKVENIVREEMNRAGAQEMLMPMVQPADLWKETGRYEKYGPELLRFFDRNNRESCLGPTHEEVITDIVRNELSSYRDLPINLYQIQTKFRDEIRPRFGLMRGREFVMKDAYSFDVDDEQANLSYDKMFEAYKRIFTRCGLQFRPVQADSGAIGGSHSHEFMVLAKTGEDTIVVCKDCEYAANMEKAEVKLVATENDEALAELEKIETPGKRKVNAVCDFLQITPQQLVKTMVFEADGEAVAVLVRGDREVEEVKLKNLLGVADVELMDDKAVFDATGVPTGYLGPVAIPIRVVADQEVMVMKNFYVGGNEKNFHLKNVNIERDCTVSAVADLRQISTDDPCPRCGGRLELTEGIEVGHVFKLGTGYSESMNARFQDGTGDEKPFVMGCYGIGVSRVVAAAIEQNHDKDGIIFPVPLAPYTVTVLNLGLKDPEITAAAEKLYAELQAAGLSVLLDDRDERPGAKFKDADLLGIPYRLTVGKGLAKNGMVEVRRRRDGHTEEMTPEVAADFLARCIQAELTD.

Belongs to the class-II aminoacyl-tRNA synthetase family. ProS type 1 subfamily. Homodimer.

Its subcellular location is the cytoplasm. The catalysed reaction is tRNA(Pro) + L-proline + ATP = L-prolyl-tRNA(Pro) + AMP + diphosphate. Functionally, catalyzes the attachment of proline to tRNA(Pro) in a two-step reaction: proline is first activated by ATP to form Pro-AMP and then transferred to the acceptor end of tRNA(Pro). As ProRS can inadvertently accommodate and process non-cognate amino acids such as alanine and cysteine, to avoid such errors it has two additional distinct editing activities against alanine. One activity is designated as 'pretransfer' editing and involves the tRNA(Pro)-independent hydrolysis of activated Ala-AMP. The other activity is designated 'posttransfer' editing and involves deacylation of mischarged Ala-tRNA(Pro). The misacylated Cys-tRNA(Pro) is not edited by ProRS. In Desulfotalea psychrophila (strain LSv54 / DSM 12343), this protein is Proline--tRNA ligase.